Here is a 449-residue protein sequence, read N- to C-terminus: Exopolygalacturonase X-2 (449 aa).

A signal peptide spans Met1–Ala24. N-linked (GlcNAc...) asparagine glycans are attached at residues Asn136, Asn172, and Asn208. Residues Ser240 to Pro261 form a PbH1 1 repeat. The active-site Proton donor is the Asp254. Cys256 and Cys273 are joined by a disulfide. N-linked (GlcNAc...) asparagine glycans are attached at residues Asn262 and Asn274. PbH1 repeat units lie at residues Ser263 to Ser283 and Val294 to Val315. His277 is a catalytic residue. Asn301, Asn306, Asn340, and Asn365 each carry an N-linked (GlcNAc...) asparagine glycan. An intrachain disulfide couples Cys403 to Cys409. Asn416 and Asn421 each carry an N-linked (GlcNAc...) asparagine glycan.

This sequence belongs to the glycosyl hydrolase 28 family.

The protein resides in the secreted. The enzyme catalyses [(1-&gt;4)-alpha-D-galacturonosyl](n) + H2O = alpha-D-galacturonate + [(1-&gt;4)-alpha-D-galacturonosyl](n-1). In terms of biological role, specific in hydrolyzing the terminal glycosidic bond of polygalacturonic acid and oligogalacturonates. The sequence is that of Exopolygalacturonase X-2 (pgaX-2) from Emericella nidulans (strain FGSC A4 / ATCC 38163 / CBS 112.46 / NRRL 194 / M139) (Aspergillus nidulans).